Consider the following 401-residue polypeptide: Sodium/glutamate symporter (401 aa).

The Periplasmic portion of the chain corresponds to 1–6; that stretch reads MFHLDT. The helical transmembrane segment at 7–24 threads the bilayer; that stretch reads LATLVAATLTLLLGRKLV. Residues 25-32 lie on the Cytoplasmic side of the membrane; the sequence is HSVSFLKK. The chain crosses the membrane as a helical span at residues 33–52; that stretch reads YTIPEPVAGGLLVALALLVL. The Periplasmic portion of the chain corresponds to 53–69; the sequence is KKSMGWEVNFDMSLRDP. Residues 70–87 form a helical membrane-spanning segment; it reads LMLAFFATIGLNANIASL. The Cytoplasmic segment spans residues 88–93; it reads RAGGRV. A helical membrane pass occupies residues 94–116; it reads VGIFLIVVVGLLVMQNAIGIGMA. Topologically, residues 117-156 are periplasmic; sequence SLLGLDPLMGLLAGSITLSGGHGTGAAWSKLFIERYGFTN. The chain crosses the membrane as a helical span at residues 157 to 179; the sequence is ATEVAMACATFGLVLGGLIGGPV. The Cytoplasmic segment spans residues 180–212; it reads ARYLVKHSTTPNGIPDDQEVPTAFEKPDVGRMI. The helical transmembrane segment at 213-235 threads the bilayer; sequence TSLVLIETIALIAICLTVGKIVA. Over 236–244 the chain is Periplasmic; that stretch reads QLLAGTAFE. Residues 245-267 traverse the membrane as a helical segment; it reads LPTFVCVLFVGVILSNGLSIMGF. At 268 to 276 the chain is on the cytoplasmic side; it reads YRVFERAVS. Residues 277–292 form a helical membrane-spanning segment; it reads VLGNVSLSLFLAMALM. The Periplasmic segment spans residues 293–301; sequence GLKLWELAS. A helical membrane pass occupies residues 302–324; the sequence is LALPMLAILVVQTIFMALYAIFV. The Cytoplasmic segment spans residues 325–367; the sequence is TWRMMGKNYDAAVLAAGHCGFGLGATPTAIANMQAITERFGPS. The chain crosses the membrane as a helical span at residues 368–390; that stretch reads HMAFLVVPMVGAFFIDIVNALVI. At 391-401 the chain is on the periplasmic side; sequence KLYLMLPIFAG.

Belongs to the glutamate:Na(+) symporter (ESS) (TC 2.A.27) family.

The protein localises to the cell inner membrane. Inhibited by the uncoupler carbonylcyanide m-chlorophenylhydrazone (CCCP) and the ionophore monensin. Catalyzes the sodium-dependent, binding-protein-independent transport of glutamate. The sequence is that of Sodium/glutamate symporter from Escherichia coli (strain K12).